The sequence spans 213 residues: Embryo-specific protein ATS3 (213 aa).

A signal peptide spans 1-21 (MTFPSLSVSFLFFAFIFVTHA). A PLAT domain is found at 34–148 (CPYTVVVMTS…LNTWYGHNNC (115 aa)). The tract at residues 147 to 188 (NCNTTGRPSSPDLPPPHFPPEFPPETPTTPPPPPPRPSAASR) is disordered. The N-linked (GlcNAc...) asparagine glycan is linked to Asn-149. The span at 157–183 (PDLPPPHFPPEFPPETPTTPPPPPPRP) shows a compositional bias: pro residues.

Expressed in seeds. Expression is restricted to the developing embryo.

The protein resides in the secreted. Functionally, may play a role during embryo development. The polypeptide is Embryo-specific protein ATS3 (Arabidopsis thaliana (Mouse-ear cress)).